The sequence spans 131 residues: Phosphoribosyl-AMP cyclohydrolase (131 aa).

Position 78 (Asp78) interacts with Mg(2+). Cys79 contributes to the Zn(2+) binding site. Mg(2+)-binding residues include Asp80 and Asp82. Zn(2+) is bound by residues Cys96 and Cys103.

It belongs to the PRA-CH family. As to quaternary structure, homodimer. Mg(2+) serves as cofactor. Requires Zn(2+) as cofactor.

The protein resides in the cytoplasm. It carries out the reaction 1-(5-phospho-beta-D-ribosyl)-5'-AMP + H2O = 1-(5-phospho-beta-D-ribosyl)-5-[(5-phospho-beta-D-ribosylamino)methylideneamino]imidazole-4-carboxamide. It functions in the pathway amino-acid biosynthesis; L-histidine biosynthesis; L-histidine from 5-phospho-alpha-D-ribose 1-diphosphate: step 3/9. Functionally, catalyzes the hydrolysis of the adenine ring of phosphoribosyl-AMP. The chain is Phosphoribosyl-AMP cyclohydrolase from Thioalkalivibrio sulfidiphilus (strain HL-EbGR7).